Consider the following 205-residue polypeptide: MTNILWHQHPVDQAARAEQKGQNPVLLWFTGLSGAGKSTLAGALERALFEAGFHTYLLDGDNVRHGLCKDLGFTVEDRDENLRRVGEVAKLMVDAGLVVLSAFISPTREERDSIRARFPTSQFIEVHVSTPLSVCEQRDPKGLYVKARSGEISNFTGISSPYEAPLAAELTIDTSKGDLATQVRALIDYLTAINVINADKAKALA.

Gly31–Ser38 contacts ATP. The active-site Phosphoserine intermediate is the Ser105.

Belongs to the APS kinase family.

The catalysed reaction is adenosine 5'-phosphosulfate + ATP = 3'-phosphoadenylyl sulfate + ADP + H(+). The protein operates within sulfur metabolism; hydrogen sulfide biosynthesis; sulfite from sulfate: step 2/3. In terms of biological role, catalyzes the synthesis of activated sulfate. This Shewanella baltica (strain OS155 / ATCC BAA-1091) protein is Adenylyl-sulfate kinase.